The following is a 345-amino-acid chain: Phosphoribosylformylglycinamidine cyclo-ligase (345 aa).

Belongs to the AIR synthase family.

It localises to the cytoplasm. It carries out the reaction 2-formamido-N(1)-(5-O-phospho-beta-D-ribosyl)acetamidine + ATP = 5-amino-1-(5-phospho-beta-D-ribosyl)imidazole + ADP + phosphate + H(+). The protein operates within purine metabolism; IMP biosynthesis via de novo pathway; 5-amino-1-(5-phospho-D-ribosyl)imidazole from N(2)-formyl-N(1)-(5-phospho-D-ribosyl)glycinamide: step 2/2. The chain is Phosphoribosylformylglycinamidine cyclo-ligase from Aeromonas hydrophila subsp. hydrophila (strain ATCC 7966 / DSM 30187 / BCRC 13018 / CCUG 14551 / JCM 1027 / KCTC 2358 / NCIMB 9240 / NCTC 8049).